A 488-amino-acid chain; its full sequence is Dihydrolipoyl dehydrogenase, mitochondrial (488 aa).

The N-terminal 25 residues, 1–25 (MLRINRISNLRTFGQRFFSTEQQDV), are a transit peptide targeting the mitochondrion. FAD is bound by residues 52 to 61 (EKRGKLGGTC), lysine 70, glycine 134, and 163 to 165 (TGS). Cysteine 61 and cysteine 66 are disulfide-bonded. Residues 200–207 (GGGVIGLE), glutamate 223, valine 257, and glycine 294 contribute to the NAD(+) site. FAD-binding positions include aspartate 335 and 341–344 (MLAH). The Proton acceptor role is filled by histidine 467.

Belongs to the class-I pyridine nucleotide-disulfide oxidoreductase family. The cofactor is FAD.

It localises to the mitochondrion matrix. The enzyme catalyses N(6)-[(R)-dihydrolipoyl]-L-lysyl-[protein] + NAD(+) = N(6)-[(R)-lipoyl]-L-lysyl-[protein] + NADH + H(+). This chain is Dihydrolipoyl dehydrogenase, mitochondrial (lpd), found in Dictyostelium discoideum (Social amoeba).